A 151-amino-acid polypeptide reads, in one-letter code: Immunity protein YezG (151 aa).

A coiled-coil region spans residues 62–90 (KDIFKTLLRELRELFEELRTEHRNNNDDV).

As to quaternary structure, interacts with cognate toxin YeeF but not with non-cognate toxin YobL. The interaction probably inhibits the toxic activity of YeeF. May bind with a stoichiometry of 2:2 to YeeF.

The protein localises to the cytoplasm. Its function is as follows. Immunity component of one of 6 LXG toxin-immunity modules in this strain. They promote kin selection, mediate competition in biofilms, and drive spatial segregation of different strains, indicating that LXG toxins may help avoid warfare between strains in biofilms. Mediates intercellular competition during biofilm formation; disruption of the operon disadvantages the bacteria, but overexpression of the cognate immunity protein restores growth in competition with wild-type. In situ neutralizes the toxic effect of cognate toxin YeeF. Probably neutralizes the ability to inhibit growth of cognate toxin YeeF. Probably does not have immunity protein activity on other LXG toxins. In Bacillus subtilis (strain 168), this protein is Immunity protein YezG (yezG).